Here is a 506-residue protein sequence, read N- to C-terminus: Hexokinase-6 (506 aa).

Residues 6-26 (VVGTAVVVCAAAAAAVGVAVV) form a helical membrane-spanning segment. The Hexokinase domain maps to 43-497 (RRAAAVIEEV…SGIGAALLAA (455 aa)). The interval 98–236 (TGDEHGLFYA…GLDMKVTALV (139 aa)) is hexokinase small subdomain. ADP-binding residues include glycine 112, threonine 113, and asparagine 114. Residues threonine 202, lysine 203, asparagine 237, and aspartate 238 each coordinate D-glucose. Positions 237–486 (NDTVGTLAGG…SSVVVKLAND (250 aa)) are hexokinase large subdomain. An ADP-binding site is contributed by threonine 261. Positions 264, 292, and 323 each coordinate D-glucose. An ADP-binding site is contributed by glycine 451.

The protein belongs to the hexokinase family. As to expression, expressed in roots, leaves, flowers, immature seeds and endosperm.

It is found in the plastid. It localises to the chloroplast outer membrane. It carries out the reaction a D-hexose + ATP = a D-hexose 6-phosphate + ADP + H(+). The catalysed reaction is D-fructose + ATP = D-fructose 6-phosphate + ADP + H(+). The enzyme catalyses D-glucose + ATP = D-glucose 6-phosphate + ADP + H(+). Its pathway is carbohydrate metabolism; hexose metabolism. It functions in the pathway carbohydrate degradation; glycolysis; D-glyceraldehyde 3-phosphate and glycerone phosphate from D-glucose: step 1/4. Its function is as follows. Fructose and glucose phosphorylating enzyme. Functions as a glucose sensor for plant growth and photosynthesis. The chain is Hexokinase-6 (HXK6) from Oryza sativa subsp. japonica (Rice).